The chain runs to 41 residues: Photosystem I reaction center subunit IX (41 aa).

The helical transmembrane segment at 7 to 27 (YLSTAPVIALAWMSFTAGLLI) threads the bilayer.

It belongs to the PsaJ family.

It is found in the plastid. Its subcellular location is the chloroplast thylakoid membrane. May help in the organization of the PsaE and PsaF subunits. The chain is Photosystem I reaction center subunit IX from Tupiella akineta (Green alga).